The chain runs to 535 residues: Probable C4-dicarboxylate sensor kinase (535 aa).

Over 1-11 the chain is Cytoplasmic; the sequence is MNKKKLSIRWK. A helical membrane pass occupies residues 12–32; that stretch reads ITILSYILVIFSFLIGGIVLI. Residues 33-172 are Extracellular-facing; sequence GNIQHTEERE…IADILLHLKR (140 aa). Residues 173-193 traverse the membrane as a helical segment; it reads DIAFIVVLTLGFGLAGSFLLA. Over 194–535 the chain is Cytoplasmic; it reads RHIKKQMFQL…MKGEEAQHGS (342 aa). Residues 213-276 enclose the PAS domain; it reads EERTATFHSM…PEIVERNKAV (64 aa). The region spanning 333–528 is the Histidine kinase domain; the sequence is VQNHEHMNKL…SFSIVFPMKG (196 aa). Phosphohistidine; by autocatalysis is present on histidine 336.

The protein resides in the cell membrane. The catalysed reaction is ATP + protein L-histidine = ADP + protein N-phospho-L-histidine.. Member of the two-component regulatory system DctS/DctR. Probably activates DctR by phosphorylation. Essential for expression of dctP. The sequence is that of Probable C4-dicarboxylate sensor kinase (dctS) from Bacillus subtilis (strain 168).